Here is a 469-residue protein sequence, read N- to C-terminus: Adenosylhomocysteinase (469 aa).

Substrate-binding residues include Thr-63, Asp-139, and Glu-164. Thr-165–Thr-167 is a binding site for NAD(+). Substrate is bound by residues Lys-194 and Asp-198. NAD(+) is bound by residues Asn-199, Gly-228–Gly-233, Glu-251, Asn-300, Ile-321–His-323, and Asn-375.

The protein belongs to the adenosylhomocysteinase family. NAD(+) is required as a cofactor.

The protein resides in the cytoplasm. The catalysed reaction is S-adenosyl-L-homocysteine + H2O = L-homocysteine + adenosine. Its pathway is amino-acid biosynthesis; L-homocysteine biosynthesis; L-homocysteine from S-adenosyl-L-homocysteine: step 1/1. Its function is as follows. May play a key role in the regulation of the intracellular concentration of adenosylhomocysteine. The protein is Adenosylhomocysteinase of Pseudomonas putida (strain W619).